The primary structure comprises 377 residues: Glutamate 5-kinase (377 aa).

K20 is an ATP binding site. Substrate is bound by residues S60, D147, and N159. 179-180 (SD) lines the ATP pocket. The region spanning 281–355 (HGQLHLDAGA…GQSTSDLPEF (75 aa)) is the PUA domain.

This sequence belongs to the glutamate 5-kinase family.

The protein resides in the cytoplasm. The enzyme catalyses L-glutamate + ATP = L-glutamyl 5-phosphate + ADP. Its pathway is amino-acid biosynthesis; L-proline biosynthesis; L-glutamate 5-semialdehyde from L-glutamate: step 1/2. Functionally, catalyzes the transfer of a phosphate group to glutamate to form L-glutamate 5-phosphate. The polypeptide is Glutamate 5-kinase (Corynebacterium jeikeium (strain K411)).